A 148-amino-acid polypeptide reads, in one-letter code: Lysozyme C (148 aa).

The signal sequence occupies residues 1 to 18 (MKAVIILGLVLLSVTVQG). Residues 19–148 (KIFERCELAR…VSQYVQGCGV (130 aa)) form the C-type lysozyme domain. 4 disulfides stabilise this stretch: C24–C146, C48–C134, C83–C99, and C95–C113. Active-site residues include E53 and D71.

The protein belongs to the glycosyl hydrolase 22 family. Monomer.

The enzyme catalyses Hydrolysis of (1-&gt;4)-beta-linkages between N-acetylmuramic acid and N-acetyl-D-glucosamine residues in a peptidoglycan and between N-acetyl-D-glucosamine residues in chitodextrins.. Lysozymes have primarily a bacteriolytic function; those in tissues and body fluids are associated with the monocyte-macrophage system and enhance the activity of immunoagents. In Allenopithecus nigroviridis (Allen's swamp monkey), this protein is Lysozyme C (LYZ).